A 413-amino-acid chain; its full sequence is Palmitoyltransferase ZDHHC6 (413 aa).

Residues 1–24 (MGIFCSVIKFENLQDLRRLCHWGP) lie on the Cytoplasmic side of the membrane. Residues 25 to 45 (IIALGVIAICSTMAMIDSVLW) form a helical membrane-spanning segment. Topologically, residues 46–57 (YWPLHTTGGSVN) are lumenal. Residues 58 to 78 (FIMLINWTVMILYNYFNAMFA) traverse the membrane as a helical segment. Residues 79–143 (GPGFVPRGWK…NCCGHQNHAS (65 aa)) are Cytoplasmic-facing. The 51-residue stretch at 99 to 149 (QYCKVCQAYKAPRSHHCRKCNRCVMKMDHHCPWINNCCGHQNHASFTLFLL) folds into the DHHC domain. The active-site S-palmitoyl cysteine intermediate is C129. Residues 144-164 (FTLFLLLAPLGCTHAAFIFVM) form a helical membrane-spanning segment. Over 165–194 (TMYTQLYNRLSFGWNTVKIDMSAARRDPPP) the chain is Lumenal. The helical transmembrane segment at 195 to 215 (IVPFGLAAFAATLFALGLALG) threads the bilayer. Residues 216–413 (TTIAVGMLFF…PAPEGEKKNR (198 aa)) are Cytoplasmic-facing. Residues 313 to 398 (VRSVRYKVIE…PRNCVEKCPC (86 aa)) form the SH3 domain. 3 S-palmitoyl cysteine lipidation sites follow: C328, C329, and C343. The short motif at 410–413 (KKNR) is the Di-lysine motif element.

Belongs to the DHHC palmitoyltransferase family. As to quaternary structure, homooligomerizes. Interacts with SELENOK. In terms of processing, palmitoylated at 3 different sites by ZDHHC16. The combination of the different palmitoylation events strongly affects the quaternary assembly of ZDHHC6, its localization, stability and function. Palmitoylation at Cys-328 accelerates the turnover of ZDHHC6. Depalmitoylated by LYPLA2.

The protein resides in the endoplasmic reticulum membrane. The catalysed reaction is L-cysteinyl-[protein] + hexadecanoyl-CoA = S-hexadecanoyl-L-cysteinyl-[protein] + CoA. It carries out the reaction L-cysteinyl-[protein] + octadecanoyl-CoA = S-octadecanoyl-L-cysteinyl-[protein] + CoA. In terms of biological role, endoplasmic reticulum palmitoyl acyltransferase that mediates palmitoylation of proteins such as AMFR, CALX, ITPR1 and TFRC. Palmitoylates calnexin (CALX), which is required for its association with the ribosome-translocon complex and efficient folding of glycosylated proteins. Mediates palmitoylation of AMFR, promoting AMFR distribution to the peripheral endoplasmic reticulum. Together with SELENOK, palmitoylates ITPR1 in immune cells, leading to regulate ITPR1 stability and function. Stearoyltransferase that mediates stearoylation of TFRC to inhibit TFRC-mediated activation of the JNK pathway and mitochondrial fragmentation. In Mus musculus (Mouse), this protein is Palmitoyltransferase ZDHHC6.